Reading from the N-terminus, the 638-residue chain is DNA gyrase subunit B (638 aa).

Residues 422 to 536 (SELYIVEGDS…NGYVYIAQPP (115 aa)) form the Toprim domain. Residues Glu428, Asp501, and Asp503 each coordinate Mg(2+).

The protein belongs to the type II topoisomerase GyrB family. Heterotetramer, composed of two GyrA and two GyrB chains. In the heterotetramer, GyrA contains the active site tyrosine that forms a transient covalent intermediate with DNA, while GyrB binds cofactors and catalyzes ATP hydrolysis. Mg(2+) is required as a cofactor. Mn(2+) serves as cofactor. It depends on Ca(2+) as a cofactor.

Its subcellular location is the cytoplasm. The enzyme catalyses ATP-dependent breakage, passage and rejoining of double-stranded DNA.. Functionally, a type II topoisomerase that negatively supercoils closed circular double-stranded (ds) DNA in an ATP-dependent manner to modulate DNA topology and maintain chromosomes in an underwound state. Negative supercoiling favors strand separation, and DNA replication, transcription, recombination and repair, all of which involve strand separation. Also able to catalyze the interconversion of other topological isomers of dsDNA rings, including catenanes and knotted rings. Type II topoisomerases break and join 2 DNA strands simultaneously in an ATP-dependent manner. This chain is DNA gyrase subunit B, found in Bacillus subtilis (strain 168).